Reading from the N-terminus, the 231-residue chain is MIKDERWEGVYSFEDSPYLMETLTDLRKIGTENISFRKGLVRLGRYMGYELTKTMEFEKMPIQTPLEKTQGVFAKDRKNVVIITILRAAFPLMEGLIKNFESAKVGIVSASRGHAPDFNIEMNYIKVPQLNPEDTVIVSDPMIATGSTLIHVLREFKDSKPKRMMIVGVLAAPEGINAVKAEFPDVEIFVTKIDEKLNKDGYIVPGLGDAGDRAFGEPFKVSMLPQMHNLE.

GTP is bound at residue 38–42 (KGLVR). Residues Arg-87, Arg-112, and 140–148 (DPMIATGST) contribute to the 5-phospho-alpha-D-ribose 1-diphosphate site. Residues Ile-203 and 208 to 210 (GDA) contribute to the uracil site. Asp-209 is a binding site for 5-phospho-alpha-D-ribose 1-diphosphate.

This sequence belongs to the UPRTase family. The cofactor is Mg(2+).

It carries out the reaction UMP + diphosphate = 5-phospho-alpha-D-ribose 1-diphosphate + uracil. It functions in the pathway pyrimidine metabolism; UMP biosynthesis via salvage pathway; UMP from uracil: step 1/1. With respect to regulation, allosterically activated by GTP. In terms of biological role, catalyzes the conversion of uracil and 5-phospho-alpha-D-ribose 1-diphosphate (PRPP) to UMP and diphosphate. The polypeptide is Uracil phosphoribosyltransferase (Methanococcus maripaludis (strain C6 / ATCC BAA-1332)).